A 287-amino-acid polypeptide reads, in one-letter code: Pyridoxal kinase PdxY (287 aa).

Substrate is bound by residues serine 10 and 45-46 (TQ). ATP-binding positions include aspartate 112, alanine 144, glutamate 149, lysine 182, and 209–212 (RPLV). Position 224 (aspartate 224) interacts with substrate.

It belongs to the pyridoxine kinase family. PdxY subfamily. As to quaternary structure, homodimer. Requires Mg(2+) as cofactor.

The enzyme catalyses pyridoxal + ATP = pyridoxal 5'-phosphate + ADP + H(+). It participates in cofactor metabolism; pyridoxal 5'-phosphate salvage; pyridoxal 5'-phosphate from pyridoxal: step 1/1. Its function is as follows. Pyridoxal kinase involved in the salvage pathway of pyridoxal 5'-phosphate (PLP). Catalyzes the phosphorylation of pyridoxal to PLP. This is Pyridoxal kinase PdxY from Shigella dysenteriae serotype 1 (strain Sd197).